Reading from the N-terminus, the 215-residue chain is Cytochrome b6 (215 aa).

Residues 32-52 form a helical membrane-spanning segment; sequence IFYCIGGITFTCFIMQVASGF. Residue Cys35 coordinates heme c. His86 and His100 together coordinate heme b. Helical transmembrane passes span 90 to 110, 116 to 136, and 186 to 206; these read ASMM…TGGF, LTWV…VTGY, and LHTF…FLMI. Residues His187 and His202 each coordinate heme b.

Belongs to the cytochrome b family. PetB subfamily. As to quaternary structure, the 4 large subunits of the cytochrome b6-f complex are cytochrome b6, subunit IV (17 kDa polypeptide, PetD), cytochrome f and the Rieske protein, while the 4 small subunits are PetG, PetL, PetM and PetN. The complex functions as a dimer. Heme b is required as a cofactor. The cofactor is heme c.

It localises to the plastid. The protein localises to the chloroplast thylakoid membrane. Component of the cytochrome b6-f complex, which mediates electron transfer between photosystem II (PSII) and photosystem I (PSI), cyclic electron flow around PSI, and state transitions. The polypeptide is Cytochrome b6 (Mesostigma viride (Green alga)).